Here is a 156-residue protein sequence, read N- to C-terminus: Small ribosomal subunit protein uS7 (156 aa).

Belongs to the universal ribosomal protein uS7 family. In terms of assembly, part of the 30S ribosomal subunit. Contacts proteins S9 and S11.

Functionally, one of the primary rRNA binding proteins, it binds directly to 16S rRNA where it nucleates assembly of the head domain of the 30S subunit. Is located at the subunit interface close to the decoding center, probably blocks exit of the E-site tRNA. In Mycoplasmopsis synoviae (strain 53) (Mycoplasma synoviae), this protein is Small ribosomal subunit protein uS7.